Here is a 212-residue protein sequence, read N- to C-terminus: Ribosomal RNA small subunit methyltransferase G (212 aa).

Residues glycine 75, leucine 80, alanine 126–glutamine 127, and arginine 141 contribute to the S-adenosyl-L-methionine site.

Belongs to the methyltransferase superfamily. RNA methyltransferase RsmG family.

Its subcellular location is the cytoplasm. Specifically methylates the N7 position of guanine in position 518 of 16S rRNA. This Beutenbergia cavernae (strain ATCC BAA-8 / DSM 12333 / CCUG 43141 / JCM 11478 / NBRC 16432 / NCIMB 13614 / HKI 0122) protein is Ribosomal RNA small subunit methyltransferase G.